The sequence spans 272 residues: Probable prolyl 4-hydroxylase 11 (272 aa).

Topologically, residues 1-55 (MSKSTSVSTILYLRQRLQGLKIYETSDLIQHINTFDELVGEQVSVDVKIEEKTKD) are cytoplasmic. A helical; Signal-anchor for type II membrane protein membrane pass occupies residues 56–80 (MILLCSLSPLLTTLTCSMVKVAASL). The Lumenal portion of the chain corresponds to 81–272 (RFPNERWLEV…KRHCLSLNLF (192 aa)). The Fe2OG dioxygenase domain occupies 179-272 (NGETLQVINY…KRHCLSLNLF (94 aa)). Residues His-197, Asp-199, and His-261 each contribute to the Fe cation site.

This sequence belongs to the P4HA family. Requires Fe(2+) as cofactor. L-ascorbate serves as cofactor.

It localises to the endoplasmic reticulum membrane. It catalyses the reaction L-prolyl-[collagen] + 2-oxoglutarate + O2 = trans-4-hydroxy-L-prolyl-[collagen] + succinate + CO2. Functionally, catalyzes the post-translational formation of 4-hydroxyproline in -Xaa-Pro-Gly- sequences in proline-rich peptide sequences of plant glycoproteins and other proteins. Hydroxyprolines are important constituent of many plant cell wall glycoproteins such as extensins, hydroxyproline-rich glycoproteins, lectins and arabinogalactan proteins. The sequence is that of Probable prolyl 4-hydroxylase 11 from Arabidopsis thaliana (Mouse-ear cress).